Consider the following 177-residue polypeptide: ATP synthase subunit delta (177 aa).

This sequence belongs to the ATPase delta chain family. In terms of assembly, F-type ATPases have 2 components, F(1) - the catalytic core - and F(0) - the membrane proton channel. F(1) has five subunits: alpha(3), beta(3), gamma(1), delta(1), epsilon(1). F(0) has three main subunits: a(1), b(2) and c(10-14). The alpha and beta chains form an alternating ring which encloses part of the gamma chain. F(1) is attached to F(0) by a central stalk formed by the gamma and epsilon chains, while a peripheral stalk is formed by the delta and b chains.

Its subcellular location is the cell inner membrane. Its function is as follows. F(1)F(0) ATP synthase produces ATP from ADP in the presence of a proton or sodium gradient. F-type ATPases consist of two structural domains, F(1) containing the extramembraneous catalytic core and F(0) containing the membrane proton channel, linked together by a central stalk and a peripheral stalk. During catalysis, ATP synthesis in the catalytic domain of F(1) is coupled via a rotary mechanism of the central stalk subunits to proton translocation. This protein is part of the stalk that links CF(0) to CF(1). It either transmits conformational changes from CF(0) to CF(1) or is implicated in proton conduction. The chain is ATP synthase subunit delta from Pasteurella multocida (strain Pm70).